The following is a 428-amino-acid chain: Nucleoside diphosphate phosphatase ENTPD5 (428 aa).

Positions 1–24 (MATSWGTVFFMLVVSCVCSAVSHR) are cleaved as a signal peptide. Glu-172 serves as the catalytic Proton acceptor. N-linked (GlcNAc...) asparagine glycosylation is present at Asn-232. Disulfide bonds link Cys-272–Cys-303 and Cys-363–Cys-377. The N-linked (GlcNAc...) asparagine glycan is linked to Asn-368.

This sequence belongs to the GDA1/CD39 NTPase family. Monomer; active form. Homodimer; disulfide-linked. Homodimers are enzymatically inactive. Ca(2+) serves as cofactor. It depends on Mg(2+) as a cofactor. N-glycosylated; high-mannose type. Glycosylation is not essential for enzymatic activity. As to expression, expressed in adult liver, kidney, prostate, testis and colon. Much weaker expression in other tissues.

The protein localises to the endoplasmic reticulum. The protein resides in the secreted. The enzyme catalyses a ribonucleoside 5'-diphosphate + H2O = a ribonucleoside 5'-phosphate + phosphate + H(+). The catalysed reaction is GDP + H2O = GMP + phosphate + H(+). It carries out the reaction UDP + H2O = UMP + phosphate + H(+). It catalyses the reaction IDP + H2O = IMP + phosphate + H(+). The enzyme catalyses CDP + H2O = CMP + phosphate + H(+). The catalysed reaction is ADP + H2O = AMP + phosphate + H(+). The protein operates within protein modification; protein glycosylation. In terms of biological role, hydrolyzes nucleoside diphosphates with a preference for GDP, IDP and UDP compared to ADP and CDP. In the lumen of the endoplasmic reticulum, hydrolyzes UDP that acts as an end-product feedback inhibitor of the UDP-Glc:glycoprotein glucosyltransferases. UMP can be transported back by an UDP-sugar antiporter to the cytosol where it is consumed to regenerate UDP-glucose. Therefore, it positively regulates protein reglucosylation by clearing UDP from the ER lumen and by promoting the regeneration of UDP-glucose. Protein reglucosylation is essential to proper glycoprotein folding and quality control in the ER. This Homo sapiens (Human) protein is Nucleoside diphosphate phosphatase ENTPD5.